We begin with the raw amino-acid sequence, 885 residues long: Pyruvate, phosphate dikinase (885 aa).

Positions 1-342 (MQRVYAFEDG…LYMLQTRNGK (342 aa)) are N-terminal. Residue Arg91 participates in ATP binding. The linker 1 stretch occupies residues 343–399 (MNATATVRTGVDMVEEGLITKEQAIMRIAPQSVDQLLHKNMPANYAEAPLVKGLPAS). The segment at 400–497 (PGAATGAVVF…EVHEGDILTI (98 aa)) is central. His454 (tele-phosphohistidine intermediate) is an active-site residue. Residues 498–533 (DGSTGCVYKGEVPLEEPQVGSGYFGTILKWANEIKK) are linker 2. The segment at 534-885 (IGVFANADLP…QAQIRHPREN (352 aa)) is C-terminal. 7 residues coordinate substrate: Arg561, Arg617, Glu752, Gly773, Thr774, Asn775, and Asp776. Mg(2+) is bound at residue Glu752. Asp776 contacts Mg(2+). The Proton donor role is filled by Cys839.

Belongs to the PEP-utilizing enzyme family. Homodimer. The cofactor is Mg(2+).

The enzyme catalyses pyruvate + phosphate + ATP = phosphoenolpyruvate + AMP + diphosphate + H(+). Functionally, catalyzes the dephosphorylation of phosphoenolpyruvate and diphosphate to produce ATP. This chain is Pyruvate, phosphate dikinase, found in Entamoeba histolytica (strain ATCC 30459 / HM-1:IMSS / ABRM).